A 286-amino-acid chain; its full sequence is Nucleotide-binding protein PSPA7_5038 (286 aa).

Residue 8–15 coordinates ATP; sequence GRSGSGKS. Residue 60–63 participates in GTP binding; sequence DARN.

The protein belongs to the RapZ-like family.

Displays ATPase and GTPase activities. This is Nucleotide-binding protein PSPA7_5038 from Pseudomonas paraeruginosa (strain DSM 24068 / PA7) (Pseudomonas aeruginosa (strain PA7)).